The following is a 701-amino-acid chain: Elongation factor G 2 (701 aa).

Residues 8 to 291 enclose the tr-type G domain; the sequence is ERYRNIGISA…AVIDYLPSPA (284 aa). Residues 17–24, 88–92, and 142–145 contribute to the GTP site; these read AHIDAGKT, DTPGH, and NKMD.

This sequence belongs to the TRAFAC class translation factor GTPase superfamily. Classic translation factor GTPase family. EF-G/EF-2 subfamily.

The protein localises to the cytoplasm. In terms of biological role, catalyzes the GTP-dependent ribosomal translocation step during translation elongation. During this step, the ribosome changes from the pre-translocational (PRE) to the post-translocational (POST) state as the newly formed A-site-bound peptidyl-tRNA and P-site-bound deacylated tRNA move to the P and E sites, respectively. Catalyzes the coordinated movement of the two tRNA molecules, the mRNA and conformational changes in the ribosome. This is Elongation factor G 2 from Burkholderia lata (strain ATCC 17760 / DSM 23089 / LMG 22485 / NCIMB 9086 / R18194 / 383).